The following is a 542-amino-acid chain: CTP synthase (542 aa).

An amidoligase domain region spans residues M1–L264. S12 is a binding site for CTP. S12 is a UTP binding site. Residue S13–I18 participates in ATP binding. An L-glutamine-binding site is contributed by Y53. D70 is a binding site for ATP. Mg(2+) is bound by residues D70 and E138. Residues D145–E147, K185–Q190, and K221 each bind CTP. Residues K185–Q190 and K221 contribute to the UTP site. K237–A239 is an ATP binding site. A Glutamine amidotransferase type-1 domain is found at Y298–K541. G359 lines the L-glutamine pocket. C386 serves as the catalytic Nucleophile; for glutamine hydrolysis. L-glutamine contacts are provided by residues L387 to Q390, E410, and R467. Catalysis depends on residues H514 and E516.

The protein belongs to the CTP synthase family. As to quaternary structure, homotetramer.

The catalysed reaction is UTP + L-glutamine + ATP + H2O = CTP + L-glutamate + ADP + phosphate + 2 H(+). It catalyses the reaction L-glutamine + H2O = L-glutamate + NH4(+). The enzyme catalyses UTP + NH4(+) + ATP = CTP + ADP + phosphate + 2 H(+). The protein operates within pyrimidine metabolism; CTP biosynthesis via de novo pathway; CTP from UDP: step 2/2. With respect to regulation, allosterically activated by GTP, when glutamine is the substrate; GTP has no effect on the reaction when ammonia is the substrate. The allosteric effector GTP functions by stabilizing the protein conformation that binds the tetrahedral intermediate(s) formed during glutamine hydrolysis. Inhibited by the product CTP, via allosteric rather than competitive inhibition. Catalyzes the ATP-dependent amination of UTP to CTP with either L-glutamine or ammonia as the source of nitrogen. Regulates intracellular CTP levels through interactions with the four ribonucleotide triphosphates. This chain is CTP synthase, found in Methanococcus aeolicus (strain ATCC BAA-1280 / DSM 17508 / OCM 812 / Nankai-3).